The following is a 749-amino-acid chain: Chitin synthase G (749 aa).

5 helical membrane passes run 40–60, 73–93, 421–441, 451–471, and 483–503; these read CVGELVGIFLPVMIAILPLPP, VLQWFAFWAFSALLIIPWLFC, FMQNTIRTTALLFFILAISII, PVGFIAVSLGLNYILMVYFGI, and LMFILNPFFNWLYIVYGIFTA. The tract at residues 683-749 is disordered; that stretch reads IESGSGIPSG…RRYMQPEQMV (67 aa). Residues 697–718 are compositionally biased toward polar residues; that stretch reads LSSSVPQSGMQQSRAVPGNMSQ. A glycan (N-linked (GlcNAc...) asparagine) is linked at N715. The segment covering 728–742 has biased composition (basic residues); it reads YTKRPSRIPRQKRRY.

This sequence belongs to the chitin synthase family. Class VI subfamily.

It is found in the cell membrane. The enzyme catalyses [(1-&gt;4)-N-acetyl-beta-D-glucosaminyl](n) + UDP-N-acetyl-alpha-D-glucosamine = [(1-&gt;4)-N-acetyl-beta-D-glucosaminyl](n+1) + UDP + H(+). In terms of biological role, polymerizes chitin, a structural polymer of the cell wall and septum, by transferring the sugar moiety of UDP-GlcNAc to the non-reducing end of the growing chitin polymer. Plays an important role in septal growth or maintenance. Mediates colony spore formation. This is Chitin synthase G from Aspergillus niger (strain ATCC MYA-4892 / CBS 513.88 / FGSC A1513).